Consider the following 110-residue polypeptide: MRVLTGGVSPSSSSFEFVPLSVVSFGSTVIAEGCDAATSISWIHAWTVANGIITQVREYSNTSLTVTRIGNVVAGRRSAEIAPPSHCSSVWESQFSGRAGKPVPGLVLAI.

The polypeptide is Senescence associated gene 20 (Arabidopsis thaliana (Mouse-ear cress)).